The primary structure comprises 654 residues: Pyoverdine export ATP-binding/permease protein PvdT (654 aa).

Residues 6-245 form the ABC transporter domain; sequence IELCDIRKAY…QPEQLQANDL (240 aa). 43–50 is a binding site for ATP; sequence GASGSGKS. Transmembrane regions (helical) follow at residues 282 to 302, 529 to 549, 596 to 616, and 617 to 637; these read ALTLLGIIIGVASVVVMLAVG, LSLMLGAIAAISLLVGGIGVM, IVIALLVGGGLLLADIAVAFA, and LPAILGAFACAVITGVVFGFM.

This sequence belongs to the ABC transporter superfamily. Macrolide exporter (TC 3.A.1.122) family. Part of the tripartite efflux system PvdRT-OpmQ, which is composed of an inner membrane component with both ATPase and permease domains, PvdT, a periplasmic membrane fusion protein, PvdR, and an outer membrane component, OpmQ.

Its subcellular location is the cell inner membrane. Part of the tripartite efflux system PvdRT-OpmQ required for the secretion into the extracellular milieu of the siderophore pyoverdine (PVD), which is involved in iron acquisition. This subunit binds PVD and drives its secretion by hydrolyzing ATP. The system is responsible for export of newly synthesized PVD after the final steps of biosynthesis have taken place in the periplasm. It is also responsible for recycling of PVD after internalization of ferri-PVD into the periplasm by the outer-membrane receptor FpvA and release of iron from PVD, thus making PVD available for new cycles of iron uptake. The polypeptide is Pyoverdine export ATP-binding/permease protein PvdT (Pseudomonas entomophila (strain L48)).